A 631-amino-acid polypeptide reads, in one-letter code: MDFSQRFGVIVIGGGHAGTEAALASARMGVSTLLLTHNIETLGQMSCNPAIGGIGKSHLVREIDALGGAMGRATDKGGIQFRVLNARKGPAVRATRAQADRELYKAAIRGTLENQPNLTLFQQAVDDLVVENGRCVGVVTNMGLRFMADAVVLTAGTFLGGVIHIGLDNHQGGRAGDQPSNALACRLRELPFRVDRLKTGTPPRIDGKSVDFSVMEEQWGDNPLPVMSYLGKVEEHPQQVCCYITHTNAQTHDIIRSGFDRSPMFTGVIDGVGPRYCPSIEDKVNRYPDKDSHQIFVEPEGLNTHELYPNGISTSLPFDVQLQAVRSIRGFENAHITRPGYAIEYDYFNPQDLKHSLETQHMPGLFFAGQINGTTGYEEAGAQGLLAGLNAARLSQGKDAWTPRRDEAYIGVLVDDLITMGTQEPYRMFTSRAEYRLLLREDNADLRLTEKGRELGLVGDERWAAFNAKRDGMASEEQRLKTTWVRPKTPEAEAVNALIEKPLTHEYNLLDLLKRPELTYANLAEAVALADRPDSAVIEQMEILAKYAGYIDRQADEIEKLRAAETTALPVEFDYGQVKGLSNEVKQKLSEIRPQTLGQAGRIPGVTPAAISLLMIYLKKHHHQKKAAQQA.

FAD-binding positions include 13–18 (GGGHAG), V125, and S180. Residue 273 to 287 (GPRYCPSIEDKVNRY) coordinates NAD(+). Q370 contributes to the FAD binding site.

It belongs to the MnmG family. As to quaternary structure, homodimer. Heterotetramer of two MnmE and two MnmG subunits. FAD serves as cofactor.

The protein resides in the cytoplasm. NAD-binding protein involved in the addition of a carboxymethylaminomethyl (cmnm) group at the wobble position (U34) of certain tRNAs, forming tRNA-cmnm(5)s(2)U34. The polypeptide is tRNA uridine 5-carboxymethylaminomethyl modification enzyme MnmG (Alcanivorax borkumensis (strain ATCC 700651 / DSM 11573 / NCIMB 13689 / SK2)).